Reading from the N-terminus, the 324-residue chain is Delta-aminolevulinic acid dehydratase (324 aa).

3 residues coordinate Zn(2+): C118, C120, and C128. K195 serves as the catalytic Schiff-base intermediate with substrate. 5-aminolevulinate contacts are provided by R205 and R217. Residue E233 participates in Mg(2+) binding. K248 serves as the catalytic Schiff-base intermediate with substrate. 5-aminolevulinate contacts are provided by S274 and Y313.

Belongs to the ALAD family. In terms of assembly, homooctamer. It depends on Zn(2+) as a cofactor.

The catalysed reaction is 2 5-aminolevulinate = porphobilinogen + 2 H2O + H(+). Its pathway is porphyrin-containing compound metabolism; protoporphyrin-IX biosynthesis; coproporphyrinogen-III from 5-aminolevulinate: step 1/4. In terms of biological role, catalyzes an early step in the biosynthesis of tetrapyrroles. Binds two molecules of 5-aminolevulinate per subunit, each at a distinct site, and catalyzes their condensation to form porphobilinogen. The polypeptide is Delta-aminolevulinic acid dehydratase (hemB) (Staphylococcus epidermidis (strain ATCC 12228 / FDA PCI 1200)).